A 64-amino-acid polypeptide reads, in one-letter code: Large ribosomal subunit protein uL29 (64 aa).

This sequence belongs to the universal ribosomal protein uL29 family.

This is Large ribosomal subunit protein uL29 from Psychrobacter sp. (strain PRwf-1).